Reading from the N-terminus, the 417-residue chain is Gamma-glutamyl phosphate reductase (417 aa).

This sequence belongs to the gamma-glutamyl phosphate reductase family.

The protein localises to the cytoplasm. The enzyme catalyses L-glutamate 5-semialdehyde + phosphate + NADP(+) = L-glutamyl 5-phosphate + NADPH + H(+). The protein operates within amino-acid biosynthesis; L-proline biosynthesis; L-glutamate 5-semialdehyde from L-glutamate: step 2/2. Catalyzes the NADPH-dependent reduction of L-glutamate 5-phosphate into L-glutamate 5-semialdehyde and phosphate. The product spontaneously undergoes cyclization to form 1-pyrroline-5-carboxylate. The chain is Gamma-glutamyl phosphate reductase from Escherichia coli O8 (strain IAI1).